The following is a 452-amino-acid chain: Pup--protein ligase (452 aa).

Glu-9 lines the Mg(2+) pocket. Arg-53 contributes to the ATP binding site. Mg(2+) is bound at residue Tyr-55. The active-site Proton acceptor is Asp-57. Glu-63 is a binding site for Mg(2+). ATP-binding residues include Thr-66 and Trp-419.

This sequence belongs to the Pup ligase/Pup deamidase family. Pup-conjugating enzyme subfamily.

It catalyses the reaction ATP + [prokaryotic ubiquitin-like protein]-L-glutamate + [protein]-L-lysine = ADP + phosphate + N(6)-([prokaryotic ubiquitin-like protein]-gamma-L-glutamyl)-[protein]-L-lysine.. It functions in the pathway protein degradation; proteasomal Pup-dependent pathway. Its pathway is protein modification; protein pupylation. In terms of biological role, catalyzes the covalent attachment of the prokaryotic ubiquitin-like protein modifier Pup to the proteasomal substrate proteins, thereby targeting them for proteasomal degradation. This tagging system is termed pupylation. The ligation reaction involves the side-chain carboxylate of the C-terminal glutamate of Pup and the side-chain amino group of a substrate lysine. This chain is Pup--protein ligase, found in Acidothermus cellulolyticus (strain ATCC 43068 / DSM 8971 / 11B).